Here is a 552-residue protein sequence, read N- to C-terminus: MAGUK p55 subfamily member 2 (552 aa).

2 L27 domains span residues 8–59 and 60–118; these read SESA…EETK and LEAV…YETP. Serine 42 bears the Phosphoserine mark. Threonine 117 bears the Phosphothreonine mark. Serine 121 carries the phosphoserine modification. One can recognise a PDZ domain in the interval 140–219; sequence MVGIRKTAGE…SVILKILPSY (80 aa). An SH3 domain is found at 225 to 293; the sequence is PRQVFVKCHF…PSQLLEEKRK (69 aa). The region spanning 350 to 537 is the Guanylate kinase-like domain; it reads RKTLVLIGAQ…TFRELQTAME (188 aa).

Belongs to the MAGUK family. In terms of assembly, can homomultimerise. Interacts with CACNG2. Interacts (via the SH3-Guanylate kinase-like sub-module) with DLG4/PSD95 and DLGAP1/GKAP. Interacts (via the PDZ domain) with CADM1 (via C-terminus). Interacts with KCNN2/SK2 (via N-terminal domain). Interacts with SRC. Post-translationally, phosphorylated by SRC. In terms of tissue distribution, expressed in pyramidal neurons of CA1 region of the hippocampus.

It localises to the cell projection. The protein localises to the dendrite. It is found in the postsynaptic density. Its subcellular location is the cytoplasm. The protein resides in the cytoskeleton. It localises to the membrane. In terms of biological role, postsynaptic MAGUK scaffold protein that links CADM1 cell adhesion molecules to core components of the postsynaptic density. In CA1 pyramidal neurons, required for synaptic KCNN2-containing channel function and long-term potentiation expression. Seems to negatively regulate SRC function in epithelial cells. The protein is MAGUK p55 subfamily member 2 of Mus musculus (Mouse).